Here is a 25-residue protein sequence, read N- to C-terminus: Plasticin-L1 (25 aa).

The protein belongs to the frog skin active peptide (FSAP) family. Plasticin subfamily. In terms of tissue distribution, expressed by the skin glands.

The protein localises to the secreted. It localises to the target cell membrane. In terms of biological role, may play an immunomodulatory role in frog skin in response to microbial pathogens, since it increases the production of the pro-inflammatory cytokines TNF-alpha, IL-1 beta, IL-12, and IL-23 by mouse peritoneal macrophages and has no effect on the production of the anti-inflammatory cytokine IL-10. It is not known whether stimulation of cytokine production arises from a non-specific interaction of the peptide with the macrophage membrane or from interaction with a specific receptor. Shows a low activity in stimulating insulin release from rat BRIN-BD11 beta cells, and acts without loss of integrity of the plasma membrane. Shows a marked affinity for both neutral and anionic membranes models. Does not show antibacterial (E.coli and S.aureus). Does not show hemolytic activity against human erythrocytes. The protein is Plasticin-L1 of Leptodactylus laticeps (Santa Fe frog).